The chain runs to 576 residues: Arginine--tRNA ligase (576 aa).

The 'HIGH' region signature appears at 126–136; sequence ANPTGPMHIGH.

The protein belongs to the class-I aminoacyl-tRNA synthetase family. In terms of assembly, monomer.

It is found in the cytoplasm. The catalysed reaction is tRNA(Arg) + L-arginine + ATP = L-arginyl-tRNA(Arg) + AMP + diphosphate. The sequence is that of Arginine--tRNA ligase from Rickettsia typhi (strain ATCC VR-144 / Wilmington).